The following is a 358-amino-acid chain: Glutamate--cysteine ligase (358 aa).

This sequence belongs to the glutamate--cysteine ligase type 2 family. YbdK subfamily.

The enzyme catalyses L-cysteine + L-glutamate + ATP = gamma-L-glutamyl-L-cysteine + ADP + phosphate + H(+). Functionally, catalyzes the synthesis of gamma-glutamylcysteine (gamma-GC), the main low-molecular-weight thiol compound instead of glutathione in halophilic archaea. The sequence is that of Glutamate--cysteine ligase from Haloferax volcanii (strain ATCC 29605 / DSM 3757 / JCM 8879 / NBRC 14742 / NCIMB 2012 / VKM B-1768 / DS2) (Halobacterium volcanii).